We begin with the raw amino-acid sequence, 118 residues long: MICOS complex subunit MIC13 (118 aa).

Topologically, residues 1–7 (MVPRVWS) are mitochondrial matrix. Residues 8–26 (LMRFLIKGSVAGGAIYLVY) form a helical membrane-spanning segment. The Mitochondrial intermembrane portion of the chain corresponds to 27–118 (DQDPLGPSDK…GWEYLKERTK (92 aa)).

It belongs to the MICOS complex subunit Mic13 family. In terms of assembly, component of the mitochondrial contact site and cristae organizing system (MICOS) complex, composed of at least MICOS10/MIC10, CHCHD3/MIC19, CHCHD6/MIC25, APOO/MIC26, MICOS13/MIC13, APOOL/MIC27 and IMMT/MIC60. The MICOS complex associates with mitochondrial outer membrane proteins SAMM50, MTX1 and MTX2 (together described as components of the mitochondrial outer membrane sorting assembly machinery (SAM) complex) and DNAJC11, mitochondrial inner membrane protein TMEM11 and with HSPA9. The MICOS and SAM complexes together with DNAJC11 are part of a large protein complex spanning both membranes termed the mitochondrial intermembrane space bridging (MIB) complex.

The protein localises to the mitochondrion inner membrane. Component of the MICOS complex, a large protein complex of the mitochondrial inner membrane that plays crucial roles in the maintenance of crista junctions, inner membrane architecture, and formation of contact sites to the outer membrane. Constituent of mature MICOS complex, it is required for the formation of cristae junction (CJ) and maintenance of cristae morphology. Required for the incorporation of MICOS10/MIC10 into the MICOS complex. The polypeptide is MICOS complex subunit MIC13 (Sus scrofa (Pig)).